Reading from the N-terminus, the 587-residue chain is Folylpolyglutamate synthase, mitochondrial (587 aa).

The transit peptide at 1–42 directs the protein to the mitochondrion; the sequence is MSWARTHLRSALSLAAVSARGATTEGAARRWLSAWPAPQEPG. 106-109 provides a ligand contact to ATP; the sequence is GKGS. Positions 130, 200, and 228 each coordinate Mg(2+). ATP contacts are provided by Arg363 and Asp377. A disordered region spans residues 484-508; sequence PDFLSSPSPEPGRPGSLQPALRPPH. Position 539 is a phosphoserine (Ser539).

The protein belongs to the folylpolyglutamate synthase family. As to quaternary structure, monomer. A monovalent cation serves as cofactor.

The protein resides in the mitochondrion inner membrane. Its subcellular location is the mitochondrion matrix. It localises to the cytoplasm. It catalyses the reaction (6S)-5,6,7,8-tetrahydrofolyl-(gamma-L-Glu)(n) + L-glutamate + ATP = (6S)-5,6,7,8-tetrahydrofolyl-(gamma-L-Glu)(n+1) + ADP + phosphate + H(+). Its pathway is cofactor biosynthesis; tetrahydrofolylpolyglutamate biosynthesis. Functionally, catalyzes conversion of folates to polyglutamate derivatives allowing concentration of folate compounds in the cell and the intracellular retention of these cofactors, which are important substrates for most of the folate-dependent enzymes that are involved in one-carbon transfer reactions involved in purine, pyrimidine and amino acid synthesis. In Cricetulus griseus (Chinese hamster), this protein is Folylpolyglutamate synthase, mitochondrial (FPGS).